The following is a 425-amino-acid chain: UDP-N-acetylglucosamine 1-carboxyvinyltransferase (425 aa).

Position 25-26 (25-26 (KN)) interacts with phosphoenolpyruvate. UDP-N-acetyl-alpha-D-glucosamine is bound at residue R95. C119 serves as the catalytic Proton donor. C119 carries the post-translational modification 2-(S-cysteinyl)pyruvic acid O-phosphothioketal. UDP-N-acetyl-alpha-D-glucosamine is bound by residues 124–128 (RPVDQ), D306, and I328.

Belongs to the EPSP synthase family. MurA subfamily.

It is found in the cytoplasm. The enzyme catalyses phosphoenolpyruvate + UDP-N-acetyl-alpha-D-glucosamine = UDP-N-acetyl-3-O-(1-carboxyvinyl)-alpha-D-glucosamine + phosphate. It participates in cell wall biogenesis; peptidoglycan biosynthesis. In terms of biological role, cell wall formation. Adds enolpyruvyl to UDP-N-acetylglucosamine. The protein is UDP-N-acetylglucosamine 1-carboxyvinyltransferase of Thermus thermophilus (strain ATCC BAA-163 / DSM 7039 / HB27).